We begin with the raw amino-acid sequence, 313 residues long: uncharacterized protein (313 aa).

This is an uncharacterized protein from Acanthamoeba polyphaga mimivirus (APMV).